Reading from the N-terminus, the 169-residue chain is S-ribosylhomocysteine lyase (169 aa).

Fe cation-binding residues include H54, H58, and C128.

The protein belongs to the LuxS family. Homodimer. The cofactor is Fe cation.

The catalysed reaction is S-(5-deoxy-D-ribos-5-yl)-L-homocysteine = (S)-4,5-dihydroxypentane-2,3-dione + L-homocysteine. In terms of biological role, involved in the synthesis of autoinducer 2 (AI-2) which is secreted by bacteria and is used to communicate both the cell density and the metabolic potential of the environment. The regulation of gene expression in response to changes in cell density is called quorum sensing. Catalyzes the transformation of S-ribosylhomocysteine (RHC) to homocysteine (HC) and 4,5-dihydroxy-2,3-pentadione (DPD). The polypeptide is S-ribosylhomocysteine lyase (Shewanella sediminis (strain HAW-EB3)).